A 433-amino-acid polypeptide reads, in one-letter code: Histidine--tRNA ligase (433 aa).

It belongs to the class-II aminoacyl-tRNA synthetase family. As to quaternary structure, homodimer.

It localises to the cytoplasm. The catalysed reaction is tRNA(His) + L-histidine + ATP = L-histidyl-tRNA(His) + AMP + diphosphate + H(+). The polypeptide is Histidine--tRNA ligase (Crocosphaera subtropica (strain ATCC 51142 / BH68) (Cyanothece sp. (strain ATCC 51142))).